A 501-amino-acid chain; its full sequence is ATP synthase subunit alpha (501 aa).

169 to 176 (GDRQTGKT) is a binding site for ATP.

The protein belongs to the ATPase alpha/beta chains family. F-type ATPases have 2 components, CF(1) - the catalytic core - and CF(0) - the membrane proton channel. CF(1) has five subunits: alpha(3), beta(3), gamma(1), delta(1), epsilon(1). CF(0) has three main subunits: a(1), b(2) and c(9-12). The alpha and beta chains form an alternating ring which encloses part of the gamma chain. CF(1) is attached to CF(0) by a central stalk formed by the gamma and epsilon chains, while a peripheral stalk is formed by the delta and b chains.

It localises to the cell inner membrane. It carries out the reaction ATP + H2O + 4 H(+)(in) = ADP + phosphate + 5 H(+)(out). In terms of biological role, produces ATP from ADP in the presence of a proton gradient across the membrane. The alpha chain is a regulatory subunit. This is ATP synthase subunit alpha from Campylobacter jejuni subsp. doylei (strain ATCC BAA-1458 / RM4099 / 269.97).